The following is a 180-amino-acid chain: Free methionine-R-sulfoxide reductase (180 aa).

In terms of domain architecture, GAF spans glycine 99 to cysteine 177.

This sequence belongs to the free Met sulfoxide reductase family.

It is found in the cytoplasm. The protein resides in the nucleus. The enzyme catalyses [thioredoxin]-disulfide + L-methionine + H2O = L-methionine (R)-S-oxide + [thioredoxin]-dithiol. In terms of biological role, catalyzes the reversible oxidation-reduction of the R-enantiomer of free methionine sulfoxide to methionine. Does not act on S-enantiomer of free methionine sulfoxide or R-enantiomer of dabsylated methionine sulfoxide. Involved in protection against oxidative stress. In Saccharomyces cerevisiae (strain ATCC 204508 / S288c) (Baker's yeast), this protein is Free methionine-R-sulfoxide reductase.